We begin with the raw amino-acid sequence, 361 residues long: DNA replication and repair protein RecF (361 aa).

An ATP-binding site is contributed by 30-37; sequence GDNAQGKT.

The protein belongs to the RecF family.

It is found in the cytoplasm. Functionally, the RecF protein is involved in DNA metabolism; it is required for DNA replication and normal SOS inducibility. RecF binds preferentially to single-stranded, linear DNA. It also seems to bind ATP. This Clostridium perfringens (strain ATCC 13124 / DSM 756 / JCM 1290 / NCIMB 6125 / NCTC 8237 / Type A) protein is DNA replication and repair protein RecF.